The primary structure comprises 497 residues: Guanosine-5'-triphosphate,3'-diphosphate pyrophosphatase (497 aa).

This sequence belongs to the GppA/Ppx family. GppA subfamily.

It catalyses the reaction guanosine 3'-diphosphate 5'-triphosphate + H2O = guanosine 3',5'-bis(diphosphate) + phosphate + H(+). It participates in purine metabolism; ppGpp biosynthesis; ppGpp from GTP: step 2/2. In terms of biological role, catalyzes the conversion of pppGpp to ppGpp. Guanosine pentaphosphate (pppGpp) is a cytoplasmic signaling molecule which together with ppGpp controls the 'stringent response', an adaptive process that allows bacteria to respond to amino acid starvation, resulting in the coordinated regulation of numerous cellular activities. This is Guanosine-5'-triphosphate,3'-diphosphate pyrophosphatase from Vibrio cholerae serotype O1 (strain ATCC 39541 / Classical Ogawa 395 / O395).